Reading from the N-terminus, the 23-residue chain is Basic phospholipase A2 mangshantoxin (23 aa).

The protein belongs to the phospholipase A2 family. Group II subfamily. Ca(2+) serves as cofactor. Contains 7 disulfide bonds. Expressed by the venom gland.

The protein resides in the secreted. The enzyme catalyses a 1,2-diacyl-sn-glycero-3-phosphocholine + H2O = a 1-acyl-sn-glycero-3-phosphocholine + a fatty acid + H(+). Functionally, snake venom phospholipase A2 (PLA2) that displays presynaptic neurotoxicity. PLA2 catalyzes the calcium-dependent hydrolysis of the 2-acyl groups in 3-sn-phosphoglycerides. This is Basic phospholipase A2 mangshantoxin from Protobothrops mangshanensis (Mangshan pitviper).